The sequence spans 394 residues: Protein TsgA homolog (394 aa).

12 helical membrane passes run 11–31, 51–71, 76–96, 101–121, 134–154, 162–182, 206–226, 246–266, 274–294, 302–322, 334–354, and 363–383; these read WISY…GIVM, FLNA…EIIP, LVFG…GHNL, ISMF…TFLV, LLFT…AAAM, WYWV…LTLC, VGVL…LGFI, QLVS…SFIL, IVTV…STDN, ILAL…LGSL, FILT…GPIV, and LATA…LGFF.

The protein belongs to the major facilitator superfamily. TsgA family.

The protein localises to the cell inner membrane. The polypeptide is Protein TsgA homolog (Yersinia pseudotuberculosis serotype O:1b (strain IP 31758)).